Here is a 301-residue protein sequence, read N- to C-terminus: Rhodopsin (301 aa).

At 1–18 (LHMIHLHWYQYPPMNPMM) the chain is on the extracellular side. The chain crosses the membrane as a helical span at residues 19–43 (YPLLLIFMFITGIPCLAGNFVTIWV). The Cytoplasmic portion of the chain corresponds to 44–55 (FMTTKSLRSPAN). The chain crosses the membrane as a helical span at residues 56–78 (LLVVNLAMSDFLMMFTMFPPMMI). Over 79-92 (TCYYHTWTLGPTFC) the chain is Extracellular. An intrachain disulfide couples Cys92 to Cys169. A helical membrane pass occupies residues 93–115 (QVYAFLGNLFGCTSIWTMVFITF). A 'Ionic lock' involved in activated form stabilization motif is present at residues 116-118 (DRY). The Cytoplasmic segment spans residues 116–134 (DRYNVIVKGVAGEPLSNKK). Residues 135 to 155 (AALWILSAWVLSFSWCSAPFF) form a helical membrane-spanning segment. The Extracellular segment spans residues 156 to 182 (GWNRYVPEGNLTGCGTDYLSEDALSRS). An N-linked (GlcNAc...) asparagine glycan is attached at Asn165. A helical transmembrane segment spans residues 183-204 (YLYVYSVWVYFLPLLITIYCYV). At 205–245 (FIIKAVAAHEKGMRDQAKKMGIKSLRNEEAQKTSAECRLAK) the chain is on the cytoplasmic side. Residues 246–267 (IAMTTVALWFIAWTPYLLINWV) traverse the membrane as a helical segment. The Extracellular portion of the chain corresponds to 268-278 (GMFARSYLSPV). A helical transmembrane segment spans residues 279–300 (YTIWGYVFAKANAVYNPIVYAI). Position 288 is an N6-(retinylidene)lysine (Lys288).

The protein belongs to the G-protein coupled receptor 1 family. Opsin subfamily. In terms of assembly, homodimer. Interacts with GNAQ. In terms of processing, contains one covalently linked retinal chromophore.

Its subcellular location is the cell projection. It is found in the rhabdomere membrane. Photoreceptor required for image-forming vision at low light intensity. Can use both retinal and 3-dehydroretinal as visual pigment. Light-induced isomerization of 11-cis to all-trans retinal triggers a conformational change that activates signaling via G-proteins. Signaling via GNAQ probably mediates the activation of phospholipase C. The sequence is that of Rhodopsin (RHO) from Cambarellus shufeldtii (Cajun dwarf crayfish).